Here is a 580-residue protein sequence, read N- to C-terminus: Laccase-20 (580 aa).

The N-terminal stretch at 1 to 23 is a signal peptide; the sequence is MVASLLCTVAVAVLAVAAVGGEA. 2 Plastocyanin-like domains span residues 31–147 and 156–310; these read VVHE…PRDG and KDVP…YTSA. Asn-36 and Asn-42 each carry an N-linked (GlcNAc...) asparagine glycan. The Cu cation site is built by His-81 and His-83. Residue Asn-115 is glycosylated (N-linked (GlcNAc...) asparagine). Cu cation contacts are provided by His-126 and His-128. Residues Asn-200, Asn-339, Asn-392, Asn-429, and Asn-460 are each glycosylated (N-linked (GlcNAc...) asparagine). The Plastocyanin-like 3 domain maps to 419 to 561; the sequence is DFPVRPPRPY…ATAFIVEDGP (143 aa). Cu cation is bound by residues Asn-478, His-481, His-483, His-540, Cys-541, His-542, His-546, and Met-551. Residues 560 to 580 form a disordered region; sequence GPTPETSLPPPPPEFKRCDAS.

It belongs to the multicopper oxidase family. Cu cation serves as cofactor.

It is found in the secreted. The protein localises to the extracellular space. The protein resides in the apoplast. It catalyses the reaction 4 hydroquinone + O2 = 4 benzosemiquinone + 2 H2O. Functionally, lignin degradation and detoxification of lignin-derived products. This Oryza sativa subsp. indica (Rice) protein is Laccase-20 (LAC20).